We begin with the raw amino-acid sequence, 649 residues long: Protein teflon (649 aa).

The C2H2-type 1 zinc-finger motif lies at 33–56; that stretch reads LYCHFCRDLFTQLPEFLRHLQSNH. The interval 78–126 is disordered; the sequence is EQGKAHEDAQSAGHNSSSGDSSSLMNSEDSRAIEGSEDNSDNSPMKPEQ. Positions 88-104 are enriched in low complexity; that stretch reads SAGHNSSSGDSSSLMNS. 2 C2H2-type zinc fingers span residues 599-621 and 625-648; these read YFCKCCDDIFILKKEYLKHLISH and FQCTKCIKVFKYKGYYEKHLRNAH.

It belongs to the Teflon family. Expressed at a low level in a variety of tissues, highest expression is in testis.

It is found in the nucleus. The protein localises to the chromosome. Its function is as follows. Specifically required in males for proper segregation of autosomal bivalents at meiosis I. Expression is required in the male germ line prior to spermatocyte stage S4. May have a role as a bridging molecule maintaining adhesion to hold autosome bivalents together via heterochromatic connections. This Drosophila melanogaster (Fruit fly) protein is Protein teflon.